The primary structure comprises 255 residues: Ribonuclease PH (255 aa).

Phosphate is bound by residues arginine 86 and 124–126; that span reads GTR.

The protein belongs to the RNase PH family. Homohexameric ring arranged as a trimer of dimers.

It carries out the reaction tRNA(n+1) + phosphate = tRNA(n) + a ribonucleoside 5'-diphosphate. Functionally, phosphorolytic 3'-5' exoribonuclease that plays an important role in tRNA 3'-end maturation. Removes nucleotide residues following the 3'-CCA terminus of tRNAs; can also add nucleotides to the ends of RNA molecules by using nucleoside diphosphates as substrates, but this may not be physiologically important. Probably plays a role in initiation of 16S rRNA degradation (leading to ribosome degradation) during starvation. This Aquifex aeolicus (strain VF5) protein is Ribonuclease PH.